The primary structure comprises 350 residues: MTASLLMLVVLMTSFAADKWITNAQLSLPLLIAAVCATATAAVGIPLLRRLKMGQFIREEGPKTHQSKAGTPTMGGLLVVPVGVVLGSLITRDAVASQQLLSLAVLTLAFMLIGGIDDWSSLTKHTNTGLTARGKLLLQAMATAAFLAIAAWQGWISSSIALPFGLELPLGLMIWPLGLFVVLAESNATNLTDGLDGLASGCGALVFTGLALQLMLRGDNGDPALAGFCMAMAGAWLGFLVHNRNPARAFMGDTGSLAMGAALSGVALLSNSLWPLLVMGGVFVAESLSVIIQVWVFKATKGPDGQGRRVFRMAPLHHHFELGGTDEQSVVPAFWLVTAGLVLLGLVLRP.

9 helical membrane passes run 28–48 (LPLL…IPLL), 70–90 (GTPT…GSLI), 100–120 (LLSL…DDWS), 136–156 (LLLQ…QGWI), 164–184 (FGLE…VVLA), 195–215 (LDGL…LQLM), 221–241 (GDPA…GFLV), 249–269 (AFMG…VALL), and 328–348 (QSVV…GLVL).

Belongs to the glycosyltransferase 4 family. MraY subfamily. Requires Mg(2+) as cofactor.

The protein resides in the cell inner membrane. The catalysed reaction is UDP-N-acetyl-alpha-D-muramoyl-L-alanyl-gamma-D-glutamyl-meso-2,6-diaminopimeloyl-D-alanyl-D-alanine + di-trans,octa-cis-undecaprenyl phosphate = di-trans,octa-cis-undecaprenyl diphospho-N-acetyl-alpha-D-muramoyl-L-alanyl-D-glutamyl-meso-2,6-diaminopimeloyl-D-alanyl-D-alanine + UMP. Its pathway is cell wall biogenesis; peptidoglycan biosynthesis. In terms of biological role, catalyzes the initial step of the lipid cycle reactions in the biosynthesis of the cell wall peptidoglycan: transfers peptidoglycan precursor phospho-MurNAc-pentapeptide from UDP-MurNAc-pentapeptide onto the lipid carrier undecaprenyl phosphate, yielding undecaprenyl-pyrophosphoryl-MurNAc-pentapeptide, known as lipid I. In Synechococcus sp. (strain CC9605), this protein is Phospho-N-acetylmuramoyl-pentapeptide-transferase.